Here is a 438-residue protein sequence, read N- to C-terminus: Elongation factor 1-alpha (438 aa).

Residues 6-229 (KPHLNIVIIG…ALDTLEVPPK (224 aa)) form the tr-type G domain. Positions 15 to 22 (GHVDHGKS) are G1. 15–22 (GHVDHGKS) is a binding site for GTP. Ser22 contacts Mg(2+). A G2 region spans residues 71 to 75 (GVTIS). The tract at residues 92 to 95 (DAPG) is G3. GTP contacts are provided by residues 92 to 96 (DAPGH) and 154 to 157 (NKMD). A G4 region spans residues 154–157 (NKMD). The segment at 195–197 (SAW) is G5.

The protein belongs to the TRAFAC class translation factor GTPase superfamily. Classic translation factor GTPase family. EF-Tu/EF-1A subfamily.

The protein resides in the cytoplasm. It carries out the reaction GTP + H2O = GDP + phosphate + H(+). Its function is as follows. GTP hydrolase that promotes the GTP-dependent binding of aminoacyl-tRNA to the A-site of ribosomes during protein biosynthesis. The polypeptide is Elongation factor 1-alpha (Desulfurococcus mucosus (Desulfurococcus mobilis)).